Consider the following 63-residue polypeptide: Large ribosomal subunit protein bL35 (63 aa).

2 stretches are compositionally biased toward basic residues: residues 1–25 (MPKM…KHRQ) and 32–47 (LTKK…RPKK). Residues 1–55 (MPKMKSKSSAAKRFKKTANGFKHRQSFTSHILTKKSTKRKRHLRPKKQVNPSDVP) are disordered.

The protein belongs to the bacterial ribosomal protein bL35 family.

The chain is Large ribosomal subunit protein bL35 from Hahella chejuensis (strain KCTC 2396).